We begin with the raw amino-acid sequence, 244 residues long: tRNA1(Val) (adenine(37)-N6)-methyltransferase (244 aa).

Belongs to the methyltransferase superfamily. tRNA (adenine-N(6)-)-methyltransferase family.

Its subcellular location is the cytoplasm. The catalysed reaction is adenosine(37) in tRNA1(Val) + S-adenosyl-L-methionine = N(6)-methyladenosine(37) in tRNA1(Val) + S-adenosyl-L-homocysteine + H(+). Specifically methylates the adenine in position 37 of tRNA(1)(Val) (anticodon cmo5UAC). This chain is tRNA1(Val) (adenine(37)-N6)-methyltransferase, found in Photorhabdus laumondii subsp. laumondii (strain DSM 15139 / CIP 105565 / TT01) (Photorhabdus luminescens subsp. laumondii).